Here is a 470-residue protein sequence, read N- to C-terminus: Acetyl-CoA decarbonylase/synthase complex subunit beta 2 (470 aa).

Residues Cys189, Cys192, Cys278, and Cys280 each coordinate [Ni-Fe-S] cluster.

The protein belongs to the CdhC family. As to quaternary structure, monomer. The ACDS complex is made up of alpha, epsilon, beta, gamma and delta chains with a probable stoichiometry of (alpha(2)epsilon(2))(4)-beta(8)-(gamma(1)delta(1))(8) (Potential). It depends on [Ni-Fe-S] cluster as a cofactor.

It carries out the reaction Co(I)-[corrinoid Fe-S protein] + acetyl-CoA + H(+) = methyl-Co(III)-[corrinoid Fe-S protein] + CO + CoA. The protein operates within one-carbon metabolism; methanogenesis from acetate. Its function is as follows. Part of a complex that catalyzes the reversible cleavage of acetyl-CoA, allowing growth on acetate as sole source of carbon and energy. The alpha-epsilon complex generates CO from CO(2), while the beta subunit (this protein) combines the CO with CoA and a methyl group to form acetyl-CoA. The methyl group, which is incorporated into acetyl-CoA, is transferred to the beta subunit by a corrinoid iron-sulfur protein (the gamma-delta complex). This chain is Acetyl-CoA decarbonylase/synthase complex subunit beta 2 (cdhC2), found in Methanosarcina acetivorans (strain ATCC 35395 / DSM 2834 / JCM 12185 / C2A).